Here is a 475-residue protein sequence, read N- to C-terminus: Aspartyl/glutamyl-tRNA(Asn/Gln) amidotransferase subunit B (475 aa).

The protein belongs to the GatB/GatE family. GatB subfamily. In terms of assembly, heterotrimer of A, B and C subunits.

The enzyme catalyses L-glutamyl-tRNA(Gln) + L-glutamine + ATP + H2O = L-glutaminyl-tRNA(Gln) + L-glutamate + ADP + phosphate + H(+). It carries out the reaction L-aspartyl-tRNA(Asn) + L-glutamine + ATP + H2O = L-asparaginyl-tRNA(Asn) + L-glutamate + ADP + phosphate + 2 H(+). Functionally, allows the formation of correctly charged Asn-tRNA(Asn) or Gln-tRNA(Gln) through the transamidation of misacylated Asp-tRNA(Asn) or Glu-tRNA(Gln) in organisms which lack either or both of asparaginyl-tRNA or glutaminyl-tRNA synthetases. The reaction takes place in the presence of glutamine and ATP through an activated phospho-Asp-tRNA(Asn) or phospho-Glu-tRNA(Gln). This Bacillus mycoides (strain KBAB4) (Bacillus weihenstephanensis) protein is Aspartyl/glutamyl-tRNA(Asn/Gln) amidotransferase subunit B.